We begin with the raw amino-acid sequence, 295 residues long: Deleted in azoospermia-like (295 aa).

Residues 1-10 (MSAANPETPN) are compositionally biased toward polar residues. The interval 1–25 (MSAANPETPNSTISREASTQSSSAA) is disordered. Residues 11-25 (STISREASTQSSSAA) are compositionally biased toward low complexity. The RRM domain occupies 40–115 (NTVFVGGIDV…KKLKLGPAIR (76 aa)). Positions 80 to 132 (KGYGFVSFFNDVDVQKIVESQINFHGKKLKLGPAIRKQNLCAYHVQPRPLVFN) are homodimerization. A DAZ domain is found at 167–190 (AYPTYPNSPVQVITGYQLPVYNYQ). Y276 is modified (phosphotyrosine).

The protein belongs to the RRM DAZ family. In terms of assembly, homodimer and heterodimer. Forms a heterodimer with DAZ. Interacts with BOLL, DAZAP1 and DAZAP2. Interacts with PUM2 Multiple DAZL RRMs can bind to a single RNA containing multiple GUU triplets. Testis specific.

The protein resides in the cytoplasm. Its subcellular location is the nucleus. Its function is as follows. RNA-binding protein, which is essential for gametogenesis in both males and females. Plays a central role during spermatogenesis. Acts by binding to the 3'-UTR of mRNA, specifically recognizing GUU triplets, and thereby regulating the translation of key transcripts. This Macaca fascicularis (Crab-eating macaque) protein is Deleted in azoospermia-like (DAZL).